A 357-amino-acid chain; its full sequence is Protein Wnt-5b (357 aa).

The first 18 residues, 1–18 (MPGIRLLLAAALLCCPPP), serve as a signal peptide directing secretion. Cysteines 81 and 92 form a disulfide. Residues N91 and N97 are each glycosylated (N-linked (GlcNAc...) asparagine). 10 disulfide bridges follow: C131/C139, C141/C159, C215/C229, C217/C224, C286/C317, C302/C312, C316/C356, C332/C347, C334/C344, and C339/C340. S221 carries the O-palmitoleoyl serine; by PORCN lipid modification. Residues N289 and N303 are each glycosylated (N-linked (GlcNAc...) asparagine).

This sequence belongs to the Wnt family. Palmitoleoylation is required for efficient binding to frizzled receptors. Depalmitoleoylation leads to Wnt signaling pathway inhibition. As to expression, predominantly in neuroectodermal tissues.

It localises to the secreted. The protein localises to the extracellular space. It is found in the extracellular matrix. In terms of biological role, ligand for members of the frizzled family of seven transmembrane receptors. Probable developmental protein. May be a signaling molecule which affects the development of discrete regions of tissues. Is likely to signal over only few cell diameters. The chain is Protein Wnt-5b (WNT-5B) from Ambystoma mexicanum (Axolotl).